Consider the following 561-residue polypeptide: Mercuric reductase (561 aa).

Positions 2-65 (THLKITGMTC…AVAGLGYKAT (64 aa)) constitute an HMA domain. Residues C11 and C14 each coordinate a metal cation. FAD contacts are provided by A110, G130, and T135. The cysteines at positions 136 and 141 are disulfide-linked. FAD is bound by residues K145, A211, D403, and V411. 2 residues coordinate Hg(2+): C558 and C559.

Belongs to the class-I pyridine nucleotide-disulfide oxidoreductase family. As to quaternary structure, homodimer. FAD is required as a cofactor.

The catalysed reaction is Hg + NADP(+) + H(+) = Hg(2+) + NADPH. Functionally, resistance to Hg(2+) in bacteria appears to be governed by a specialized system which includes mercuric reductase. MerA protein is responsible for volatilizing mercury as Hg(0). Plays a pivotal role in mercury resistance under thiol-depleted conditions and cell protection. Protects cells under thiol-depleted conditions. The chain is Mercuric reductase (merA) from Pseudomonas aeruginosa.